We begin with the raw amino-acid sequence, 190 residues long: MARSTARKRALNTLYEADEKSQDILSLLDERIAHPGAQTPLPDYAIEIVKGVAEHRRQIDMTLDEHSTGWKVRRMGVVDRNILRIAAWEILFTDDVPDKVAIDEALALAKTLCDDDSPAFIHGLLSAVCTAKNAAPAPESVAEEADEESSDSAAAASEPTDEGDVSDSPDSSGASDEPAAPSAEIQPTVD.

Residues 135-190 (APAPESVAEEADEESSDSAAAASEPTDEGDVSDSPDSSGASDEPAAPSAEIQPTVD) are disordered. The segment covering 141-150 (VAEEADEESS) has biased composition (acidic residues).

This sequence belongs to the NusB family.

In terms of biological role, involved in transcription antitermination. Required for transcription of ribosomal RNA (rRNA) genes. Binds specifically to the boxA antiterminator sequence of the ribosomal RNA (rrn) operons. The protein is Transcription antitermination protein NusB of Bifidobacterium longum (strain DJO10A).